A 277-amino-acid polypeptide reads, in one-letter code: ATP synthase subunit a (277 aa).

Helical transmembrane passes span 40–60 (AWHV…LIIF), 98–118 (SALI…MNLM), 154–174 (DLNL…FYSI), 219–239 (LFGN…IGYF), and 245–265 (FMWA…FMML).

It belongs to the ATPase A chain family. In terms of assembly, F-type ATPases have 2 components, CF(1) - the catalytic core - and CF(0) - the membrane proton channel. CF(1) has five subunits: alpha(3), beta(3), gamma(1), delta(1), epsilon(1). CF(0) has three main subunits: a(1), b(2) and c(9-12). The alpha and beta chains form an alternating ring which encloses part of the gamma chain. CF(1) is attached to CF(0) by a central stalk formed by the gamma and epsilon chains, while a peripheral stalk is formed by the delta and b chains.

The protein localises to the cell inner membrane. In terms of biological role, key component of the proton channel; it plays a direct role in the translocation of protons across the membrane. The sequence is that of ATP synthase subunit a from Alteromonas mediterranea (strain DSM 17117 / CIP 110805 / LMG 28347 / Deep ecotype).